The primary structure comprises 312 residues: Ribosomal protein L11 methyltransferase (312 aa).

Positions 160, 181, 203, and 246 each coordinate S-adenosyl-L-methionine.

This sequence belongs to the methyltransferase superfamily. PrmA family.

The protein localises to the cytoplasm. It catalyses the reaction L-lysyl-[protein] + 3 S-adenosyl-L-methionine = N(6),N(6),N(6)-trimethyl-L-lysyl-[protein] + 3 S-adenosyl-L-homocysteine + 3 H(+). Methylates ribosomal protein L11. The polypeptide is Ribosomal protein L11 methyltransferase (Staphylococcus saprophyticus subsp. saprophyticus (strain ATCC 15305 / DSM 20229 / NCIMB 8711 / NCTC 7292 / S-41)).